We begin with the raw amino-acid sequence, 317 residues long: L-lactate dehydrogenase (317 aa).

Residues Phe16 to Val17, Asp38, Lys43, Tyr69, and Gly83 to Ala84 each bind NAD(+). Substrate contacts are provided by Gln86 and Arg92. NAD(+) is bound by residues Ser105, Ala122–Asn124, and Ser147. Substrate is bound at residue Asn124–Asp127. Position 152-155 (Asp152–Arg155) interacts with substrate. Beta-D-fructose 1,6-bisphosphate contacts are provided by residues Arg157 and Gln169–His172. His179 functions as the Proton acceptor in the catalytic mechanism. Tyr224 is subject to Phosphotyrosine. Thr233 is a substrate binding site.

It belongs to the LDH/MDH superfamily. LDH family. As to quaternary structure, exists as a dimer and a tetramer (dimer of dimers). The conversion occurs via the binding of fructose 1,6-bisphosphate (FBP) to the dimer.

Its subcellular location is the cytoplasm. It catalyses the reaction (S)-lactate + NAD(+) = pyruvate + NADH + H(+). It functions in the pathway fermentation; pyruvate fermentation to lactate; (S)-lactate from pyruvate: step 1/1. Allosterically activated by fructose 1,6-bisphosphate (FBP). The improvement in affinity for substrate occurs in two steps; the binding of fructose 1,6-bisphosphate (FBP) to the dimer, and the dimer to tetramer conversion. Functionally, catalyzes the conversion of lactate to pyruvate. This Geobacillus stearothermophilus (Bacillus stearothermophilus) protein is L-lactate dehydrogenase.